The primary structure comprises 312 residues: Type II methyltransferase M.NgoMIV (312 aa).

One can recognise an SAM-dependent MTase C5-type domain in the interval 3 to 311; the sequence is FTSLEICAGA…RQIIKALKKE (309 aa). Cys-74 is a catalytic residue.

This sequence belongs to the class I-like SAM-binding methyltransferase superfamily. C5-methyltransferase family.

It carries out the reaction a 2'-deoxycytidine in DNA + S-adenosyl-L-methionine = a 5-methyl-2'-deoxycytidine in DNA + S-adenosyl-L-homocysteine + H(+). Functionally, a methylase, recognizes the double-stranded sequence 5'-GCCGGC-3', methylates C-2 on both strands, and protects the DNA from cleavage by the NgoMIV endonuclease. In Neisseria gonorrhoeae, this protein is Type II methyltransferase M.NgoMIV (ngoMIVM).